A 465-amino-acid chain; its full sequence is Ribulose bisphosphate carboxylase large chain (465 aa).

Lys-4 carries the N6,N6,N6-trimethyllysine modification. Asn-113 and Thr-163 together coordinate substrate. The Proton acceptor role is filled by Lys-165. Lys-167 contacts substrate. Residues Lys-191, Asp-193, and Glu-194 each coordinate Mg(2+). At Lys-191 the chain carries N6-carboxylysine. His-284 acts as the Proton acceptor in catalysis. The substrate site is built by Arg-285, His-317, and Ser-369.

This sequence belongs to the RuBisCO large chain family. Type I subfamily. Heterohexadecamer of 8 large chains and 8 small chains; disulfide-linked. The disulfide link is formed within the large subunit homodimers. The cofactor is Mg(2+). Post-translationally, the disulfide bond which can form in the large chain dimeric partners within the hexadecamer appears to be associated with oxidative stress and protein turnover.

It localises to the plastid. It is found in the chloroplast. It carries out the reaction 2 (2R)-3-phosphoglycerate + 2 H(+) = D-ribulose 1,5-bisphosphate + CO2 + H2O. It catalyses the reaction D-ribulose 1,5-bisphosphate + O2 = 2-phosphoglycolate + (2R)-3-phosphoglycerate + 2 H(+). Functionally, ruBisCO catalyzes two reactions: the carboxylation of D-ribulose 1,5-bisphosphate, the primary event in carbon dioxide fixation, as well as the oxidative fragmentation of the pentose substrate in the photorespiration process. Both reactions occur simultaneously and in competition at the same active site. In Ulmus alata (Winged elm), this protein is Ribulose bisphosphate carboxylase large chain.